The primary structure comprises 1227 residues: ATP-dependent helicase/nuclease subunit A (1227 aa).

The region spanning 3–477 (VKYTPDQARA…IIFAENFRSS (475 aa)) is the UvrD-like helicase ATP-binding domain. Residue 24–31 (ASAGSGKT) participates in ATP binding. Residues 505 to 788 (GQLKFAAGYD…KLMTIHASKG (284 aa)) form the UvrD-like helicase C-terminal domain.

Belongs to the helicase family. AddA subfamily. As to quaternary structure, heterodimer of AddA and AddB/RexB. The cofactor is Mg(2+).

The enzyme catalyses Couples ATP hydrolysis with the unwinding of duplex DNA by translocating in the 3'-5' direction.. It carries out the reaction ATP + H2O = ADP + phosphate + H(+). Its function is as follows. The heterodimer acts as both an ATP-dependent DNA helicase and an ATP-dependent, dual-direction single-stranded exonuclease. Recognizes the chi site generating a DNA molecule suitable for the initiation of homologous recombination. The AddA nuclease domain is required for chi fragment generation; this subunit has the helicase and 3' -&gt; 5' nuclease activities. The sequence is that of ATP-dependent helicase/nuclease subunit A from Lactobacillus delbrueckii subsp. bulgaricus (strain ATCC 11842 / DSM 20081 / BCRC 10696 / JCM 1002 / NBRC 13953 / NCIMB 11778 / NCTC 12712 / WDCM 00102 / Lb 14).